A 426-amino-acid chain; its full sequence is S-adenosylmethionine synthase (426 aa).

Position 22 (histidine 22) interacts with ATP. Aspartate 24 serves as a coordination point for Mg(2+). K(+) is bound at residue glutamate 50. Residues glutamate 63 and glutamine 106 each coordinate L-methionine. The flexible loop stretch occupies residues 106 to 116 (QSPDISQGVTA). ATP is bound by residues 181–183 (DGK), 257–258 (KF), aspartate 266, 272–273 (RK), alanine 289, and lysine 293. Aspartate 266 provides a ligand contact to L-methionine. Residue lysine 297 participates in L-methionine binding.

This sequence belongs to the AdoMet synthase family. As to quaternary structure, homotetramer; dimer of dimers. Mg(2+) serves as cofactor. K(+) is required as a cofactor.

Its subcellular location is the cytoplasm. The catalysed reaction is L-methionine + ATP + H2O = S-adenosyl-L-methionine + phosphate + diphosphate. Its pathway is amino-acid biosynthesis; S-adenosyl-L-methionine biosynthesis; S-adenosyl-L-methionine from L-methionine: step 1/1. Its function is as follows. Catalyzes the formation of S-adenosylmethionine (AdoMet) from methionine and ATP. The overall synthetic reaction is composed of two sequential steps, AdoMet formation and the subsequent tripolyphosphate hydrolysis which occurs prior to release of AdoMet from the enzyme. This is S-adenosylmethionine synthase from Synechocystis sp. (strain ATCC 27184 / PCC 6803 / Kazusa).